The sequence spans 426 residues: Enolase (426 aa).

A (2R)-2-phosphoglycerate-binding site is contributed by glutamine 163. Glutamate 205 (proton donor) is an active-site residue. Mg(2+) contacts are provided by aspartate 242, glutamate 285, and aspartate 312. (2R)-2-phosphoglycerate-binding residues include lysine 337, arginine 366, serine 367, and lysine 388. The active-site Proton acceptor is lysine 337.

The protein belongs to the enolase family. The cofactor is Mg(2+).

It localises to the cytoplasm. The protein localises to the secreted. Its subcellular location is the cell surface. The catalysed reaction is (2R)-2-phosphoglycerate = phosphoenolpyruvate + H2O. It participates in carbohydrate degradation; glycolysis; pyruvate from D-glyceraldehyde 3-phosphate: step 4/5. Functionally, catalyzes the reversible conversion of 2-phosphoglycerate (2-PG) into phosphoenolpyruvate (PEP). It is essential for the degradation of carbohydrates via glycolysis. The polypeptide is Enolase (Rhodospirillum centenum (strain ATCC 51521 / SW)).